The primary structure comprises 223 residues: Sporulation-specific protein 19 (223 aa).

An N-terminal signal peptide occupies residues 1–20 (MKKQILIVAAQSILCSTVFG). The GPI-anchor amidated asparagine moiety is linked to residue Asn198. Positions 199–223 (ASNFLTPTTVALAVLLTILLFIQAY) are cleaved as a propeptide — removed in mature form.

The GPI-anchor is attached to the protein in the endoplasmic reticulum and serves to target the protein to the cell surface. There, the glucosamine-inositol phospholipid moiety is cleaved off and the GPI-modified mannoprotein is covalently attached via its lipidless GPI glycan remnant to the 1,6-beta-glucan of the outer cell wall layer.

It localises to the secreted. The protein localises to the cell wall. The protein resides in the membrane. Involved in sporulation. Essential for completion of the nuclear division. This is Sporulation-specific protein 19 (SPO19) from Saccharomyces cerevisiae (strain ATCC 204508 / S288c) (Baker's yeast).